A 251-amino-acid polypeptide reads, in one-letter code: Triosephosphate isomerase (251 aa).

9–11 (NWK) provides a ligand contact to substrate. The active-site Electrophile is the His95. Glu167 (proton acceptor) is an active-site residue. Residues Gly173, Ser213, and 234–235 (GG) contribute to the substrate site. Ser213 carries the phosphoserine modification.

The protein belongs to the triosephosphate isomerase family. In terms of assembly, homodimer.

The protein resides in the cytoplasm. The catalysed reaction is D-glyceraldehyde 3-phosphate = dihydroxyacetone phosphate. Its pathway is carbohydrate biosynthesis; gluconeogenesis. It functions in the pathway carbohydrate degradation; glycolysis; D-glyceraldehyde 3-phosphate from glycerone phosphate: step 1/1. In terms of biological role, involved in the gluconeogenesis. Catalyzes stereospecifically the conversion of dihydroxyacetone phosphate (DHAP) to D-glyceraldehyde-3-phosphate (G3P). In Halalkalibacterium halodurans (strain ATCC BAA-125 / DSM 18197 / FERM 7344 / JCM 9153 / C-125) (Bacillus halodurans), this protein is Triosephosphate isomerase.